Consider the following 502-residue polypeptide: Mannitol 2-dehydrogenase (502 aa).

An NAD(+)-binding site is contributed by 37-48; it reads IVHIGVGGFHRA.

Belongs to the mannitol dehydrogenase family. Monomer.

The enzyme catalyses D-mannitol + NAD(+) = D-fructose + NADH + H(+). Functionally, catalyzes the NAD(H)-dependent interconversion of D-fructose and D-mannitol in the mannitol metabolic pathway. The polypeptide is Mannitol 2-dehydrogenase (Aspergillus clavatus (strain ATCC 1007 / CBS 513.65 / DSM 816 / NCTC 3887 / NRRL 1 / QM 1276 / 107)).